Consider the following 434-residue polypeptide: Pre-B-cell leukemia transcription factor 3 (434 aa).

Positions 20–41 (SVQGGMALPPPPHGHEGADGDG) are disordered. Basic and acidic residues predominate over residues 32-41 (HGHEGADGDG). A PBC domain is found at 41–234 (GRKQDIGDIL…VMILRSRFLD (194 aa)). The tract at residues 48 to 127 (DILHQIMTIT…EGVSGPEKGG (80 aa)) is PBC-A. The interval 130-234 (AAAAAAAAAS…VMILRSRFLD (105 aa)) is PBC-B. A DNA-binding region (homeobox; TALE-type) is located at residues 235–297 (ARRKRRNFSK…NKRIRYKKNI (63 aa)). Residues 326–341 (NQTNSPTTPNSGSSGS) show a composition bias toward low complexity. 2 disordered regions span residues 326 to 349 (NQTNSPTTPNSGSSGSFNLPNSGD) and 403 to 434 (LNANGGWQDATTPSSVTSPTEGPGSVHSDTSN). A compositionally biased stretch (polar residues) spans 403–422 (LNANGGWQDATTPSSVTSPT).

It belongs to the TALE/PBX homeobox family. In terms of assembly, interacts with PBXIP1. Ubiquitously expressed.

Its subcellular location is the nucleus. In terms of biological role, transcriptional activator that binds the sequence 5'-ATCAATCAA-3'. This is Pre-B-cell leukemia transcription factor 3 (PBX3) from Homo sapiens (Human).